The sequence spans 229 residues: Protein-L-isoaspartate O-methyltransferase (229 aa).

The active site involves S74.

This sequence belongs to the methyltransferase superfamily. L-isoaspartyl/D-aspartyl protein methyltransferase family.

It localises to the cytoplasm. It carries out the reaction [protein]-L-isoaspartate + S-adenosyl-L-methionine = [protein]-L-isoaspartate alpha-methyl ester + S-adenosyl-L-homocysteine. Functionally, catalyzes the methyl esterification of L-isoaspartyl residues in peptides and proteins that result from spontaneous decomposition of normal L-aspartyl and L-asparaginyl residues. It plays a role in the repair and/or degradation of damaged proteins. The protein is Protein-L-isoaspartate O-methyltransferase of Pelotomaculum thermopropionicum (strain DSM 13744 / JCM 10971 / SI).